The following is a 329-amino-acid chain: DNA-directed RNA polymerase subunit alpha (329 aa).

The interval 1–235 (MQGSVTEFLK…EQLEAFVDLR (235 aa)) is alpha N-terminal domain (alpha-NTD). The tract at residues 249–329 (FDPILLRPVD…NWPPASIADE (81 aa)) is alpha C-terminal domain (alpha-CTD).

It belongs to the RNA polymerase alpha chain family. In terms of assembly, homodimer. The RNAP catalytic core consists of 2 alpha, 1 beta, 1 beta' and 1 omega subunit. When a sigma factor is associated with the core the holoenzyme is formed, which can initiate transcription.

It carries out the reaction RNA(n) + a ribonucleoside 5'-triphosphate = RNA(n+1) + diphosphate. Its function is as follows. DNA-dependent RNA polymerase catalyzes the transcription of DNA into RNA using the four ribonucleoside triphosphates as substrates. This is DNA-directed RNA polymerase subunit alpha from Cronobacter sakazakii (strain ATCC BAA-894) (Enterobacter sakazakii).